The following is a 367-amino-acid chain: 2'-5'-oligoadenylate synthase 1A (367 aa).

An interaction with dsRNA region spans residues 14–61 (DKFIEDYLLPDTTFGADVKSAVNVVCDFLKERCFQGAAHPVRVSKVVK). Ser64 is a binding site for ATP. Positions 76, 78, and 149 each coordinate Mg(2+). The interaction with dsRNA stretch occupies residues 201 to 211 (QRPTKLKSLIR). Residues Arg211, Lys214, and Gln231 each contribute to the ATP site. Cys364 carries S-geranylgeranyl cysteine lipidation.

It belongs to the 2-5A synthase family. As to quaternary structure, monomer. Homotetramer. Interacts with OAS1D; the interaction inhibits OAS1A catalytic activity. Requires Mg(2+) as cofactor. In terms of processing, C-terminal prenylated. As to expression, expressed in oocytes and granulosa cells of ovary, in intestine, stomach, spleen and uterus (at protein level). Expressed at high levels in the digestive tract and lymphoid organs. Expressed in ovary and spleen.

The protein resides in the cytoplasm. It is found in the mitochondrion. It localises to the nucleus. The protein localises to the microsome. Its subcellular location is the endoplasmic reticulum. It carries out the reaction 3 ATP = 5'-triphosphoadenylyl-(2'-&gt;5')-adenylyl-(2'-&gt;5')-adenosine + 2 diphosphate. With respect to regulation, produced as a latent enzyme which is activated by dsRNA generated during the course of viral infection. The dsRNA activator must be at least 15 nucleotides long, and no modification of the 2'-hydroxyl group is tolerated. ssRNA or dsDNA do not act as activators. Functionally, interferon-induced, dsRNA-activated antiviral enzyme which plays a critical role in cellular innate antiviral response. In addition, it may also play a role in other cellular processes such as apoptosis, cell growth, differentiation and gene regulation. Synthesizes higher oligomers of 2'-5'-oligoadenylates (2-5A) from ATP which then bind to the inactive monomeric form of ribonuclease L (RNase L) leading to its dimerization and subsequent activation. Activation of RNase L leads to degradation of cellular as well as viral RNA, resulting in the inhibition of protein synthesis, thus terminating viral replication. Can mediate the antiviral effect via the classical RNase L-dependent pathway or an alternative antiviral pathway independent of RNase L. The protein is 2'-5'-oligoadenylate synthase 1A (Oas1a) of Mus musculus (Mouse).